A 1147-amino-acid polypeptide reads, in one-letter code: Nitric oxide synthase, inducible (1147 aa).

The tract at residues 22–51 (KDINNNVEKTPGAIPSPTTQDDPKSHKHQN) is disordered. The short motif at 23 to 27 (DINNN) is the DINNN-motif; mediates interaction with SPSB1, SPSB2 and SPSB4 element. Zn(2+)-binding residues include C107 and C112. Position 115 (S115) interacts with (6R)-L-erythro-5,6,7,8-tetrahydrobiopterin. C197 lines the heme b pocket. Q260, W369, Y370, and E374 together coordinate L-arginine. Residues R378, I459, W460, and F473 each contribute to the (6R)-L-erythro-5,6,7,8-tetrahydrobiopterin site. Y488 lines the heme b pocket. Positions 512–532 (FTVLVKAVFFASVLMRKVMAS) are calmodulin-binding. The Flavodoxin-like domain maps to 536–674 (ATVLFATETG…AFRSWAVQTF (139 aa)). FMN-binding residues include T542, E543, T544, K546, and S547. Residue T564 is modified to Phosphothreonine. Position 572 is a phosphotyrosine (Y572). 6 residues coordinate FMN: S588, T589, S625, C632, E658, and Q662. One can recognise an FAD-binding FR-type domain in the interval 727-967 (KNVFTMRLKS…VRSVSGFQLP (241 aa)). An NADP(+)-binding site is contributed by R747. FAD contacts are provided by H769, R903, Y905, S906, T921, and A923. T926 contributes to the NADP(+) binding site. FAD is bound by residues Y927, V940, C941, and S942. 8 residues coordinate NADP(+): T981, R1014, S1043, R1044, K1050, Y1052, Q1054, and D1087.

The protein belongs to the NOS family. As to quaternary structure, homodimer. Interacts with NHERF1. Interacts with GAPDH; induced by oxidatively-modified low-densitity lipoprotein (LDL(ox)). Interacts with S100A8 and S100A9 to form the iNOS-S100A8/9 transnitrosylase complex. Interacts with SPSB1, SPSB2 and SPSB4. Interacts with ELOC and CUL5 in the presence of SPSB1 or SPSB2 or SPSB4. Forms a complex with ASL, ASS1 and HSP90AA1; the complex regulates cell-autonomous L-arginine synthesis and citrulline recycling while channeling extracellular L-arginine to nitric oxide synthesis pathway. It depends on heme b as a cofactor. FAD is required as a cofactor. FMN serves as cofactor. The cofactor is (6R)-L-erythro-5,6,7,8-tetrahydrobiopterin. Post-translationally, polyubiquitinated; mediated by SPSB1, SPSB2 and SPSB4, leading to proteasomal degradation. In normal kidney, expressed primarily in the medullary thick ascending limb, with minor amounts in the medullary collecting duct and vasa recta bundle.

It is found in the cytoplasm. The protein resides in the cytosol. The catalysed reaction is 2 L-arginine + 3 NADPH + 4 O2 + H(+) = 2 L-citrulline + 2 nitric oxide + 3 NADP(+) + 4 H2O. Not stimulated by calcium/calmodulin. Aspirin inhibits expression and function of this enzyme and effects may be exerted at the level of translational/post-translational modification and directly on the catalytic activity. Produces nitric oxide (NO) which is a messenger molecule with diverse functions throughout the body. In macrophages, NO mediates tumoricidal and bactericidal actions. Also has nitrosylase activity and mediates cysteine S-nitrosylation of cytoplasmic target proteins such PTGS2/COX2. As component of the iNOS-S100A8/9 transnitrosylase complex involved in the selective inflammatory stimulus-dependent S-nitrosylation of GAPDH implicated in regulation of the GAIT complex activity and probably multiple targets including ANXA5, EZR, MSN and VIM. Involved in inflammation, enhances the synthesis of pro-inflammatory mediators such as IL6 and IL8. The protein is Nitric oxide synthase, inducible (Nos2) of Rattus norvegicus (Rat).